We begin with the raw amino-acid sequence, 930 residues long: Translation initiation factor IF-2 (930 aa).

Disordered regions lie at residues 160–179 and 208–301; these read EPVE…FTDG and AKRA…AAAP. Residues 208-227 show a composition bias toward basic and acidic residues; that stretch reads AKRAAEEAKRTQPRAEKPAD. Composition is skewed to basic residues over residues 263–272 and 288–301; these read GHGHKKHHHG and KRGA…AAAP. A tr-type G domain is found at 431–600; the sequence is TRAPVVTVMG…SLQAEVLELT (170 aa). Residues 440–447 are G1; it reads GHVDHGKT. 440–447 lines the GTP pocket; the sequence is GHVDHGKT. Residues 465 to 469 form a G2 region; sequence GITQH. The G3 stretch occupies residues 486-489; the sequence is DTPG. Residues 486-490 and 540-543 contribute to the GTP site; these read DTPGH and NKCD. The tract at residues 540–543 is G4; it reads NKCD. A G5 region spans residues 576 to 578; that stretch reads SAH.

It belongs to the TRAFAC class translation factor GTPase superfamily. Classic translation factor GTPase family. IF-2 subfamily.

The protein resides in the cytoplasm. One of the essential components for the initiation of protein synthesis. Protects formylmethionyl-tRNA from spontaneous hydrolysis and promotes its binding to the 30S ribosomal subunits. Also involved in the hydrolysis of GTP during the formation of the 70S ribosomal complex. The chain is Translation initiation factor IF-2 from Cellvibrio japonicus (strain Ueda107) (Pseudomonas fluorescens subsp. cellulosa).